The following is a 293-amino-acid chain: ATP synthase gamma chain (293 aa).

The protein belongs to the ATPase gamma chain family. In terms of assembly, F-type ATPases have 2 components, CF(1) - the catalytic core - and CF(0) - the membrane proton channel. CF(1) has five subunits: alpha(3), beta(3), gamma(1), delta(1), epsilon(1). CF(0) has three main subunits: a, b and c.

It is found in the cell inner membrane. Functionally, produces ATP from ADP in the presence of a proton gradient across the membrane. The gamma chain is believed to be important in regulating ATPase activity and the flow of protons through the CF(0) complex. The chain is ATP synthase gamma chain from Nitratidesulfovibrio vulgaris (strain DSM 19637 / Miyazaki F) (Desulfovibrio vulgaris).